The sequence spans 621 residues: Na(+)/H(+) antiporter NhaA (621 aa).

The interval 1-430 (MPASSFGESS…LGWLIFKVAA (430 aa)) is na(+)/H(+) antiporter NhaA. The next 11 helical transmembrane spans lie at 27–47 (GAAV…NSPL), 72–92 (LHHW…GLEV), 109–129 (LALI…VLIV), 139–159 (GWGA…AIVG), 168–188 (VFLL…IGIV), 192–212 (EIRI…WLLG), 223–243 (VLIV…ASLA), 300–320 (FLRL…NAGV), 339–359 (VIAG…LVAV), 375–395 (VFGG…IIGL), and 409–429 (VGVL…FKVA). The region spanning 431 to 578 (QRWGEKTADL…VERDLASAVA (148 aa)) is the Thioredoxin domain.

It in the N-terminal section; belongs to the NhaA Na(+)/H(+) (TC 2.A.33) antiporter family.

Its subcellular location is the cell inner membrane. It carries out the reaction Na(+)(in) + 2 H(+)(out) = Na(+)(out) + 2 H(+)(in). Na(+)/H(+) antiporter that extrudes sodium in exchange for external protons. In Herminiimonas arsenicoxydans, this protein is Na(+)/H(+) antiporter NhaA.